The following is a 140-amino-acid chain: Vacuolar protein sorting-associated protein 55 homolog (140 aa).

Residues 1-16 (MADVPGYLRTCLDMGK) lie on the Cytoplasmic side of the membrane. A helical membrane pass occupies residues 17 to 37 (IAFLAILVSTGIVLQILACAL). Residues 38 to 40 (FNN) are Lumenal-facing. A helical transmembrane segment spans residues 41-61 (WWPMLSVIMYVLLPMPLLFFG). The Cytoplasmic segment spans residues 62–75 (GSDSTSLFNESDNS). Residues 76 to 98 (WINAAKFLTGASAVGSVAIPSIL) form a helical membrane-spanning segment. The Lumenal segment spans residues 99 to 108 (KHAGLIGWGA). The chain crosses the membrane as a helical span at residues 109–129 (LALDLSSYVVFLVAILGYICI). Residues 130–140 (GDASDNYYSYI) are Cytoplasmic-facing.

The protein belongs to the OB-RGRP/VPS55 family.

Its subcellular location is the endosome membrane. Its function is as follows. Involved in endosomal protein transport. The chain is Vacuolar protein sorting-associated protein 55 homolog from Arabidopsis thaliana (Mouse-ear cress).